The chain runs to 119 residues: Large ribosomal subunit protein bL20 (119 aa).

Belongs to the bacterial ribosomal protein bL20 family.

Binds directly to 23S ribosomal RNA and is necessary for the in vitro assembly process of the 50S ribosomal subunit. It is not involved in the protein synthesizing functions of that subunit. The sequence is that of Large ribosomal subunit protein bL20 from Verminephrobacter eiseniae (strain EF01-2).